The following is an 89-amino-acid chain: Probable Fe(2+)-trafficking protein (89 aa).

Belongs to the Fe(2+)-trafficking protein family.

Could be a mediator in iron transactions between iron acquisition and iron-requiring processes, such as synthesis and/or repair of Fe-S clusters in biosynthetic enzymes. This chain is Probable Fe(2+)-trafficking protein, found in Stenotrophomonas maltophilia (strain K279a).